Consider the following 116-residue polypeptide: Helper of Tim protein 13 (116 aa).

A CHY-type; degenerate zinc finger spans residues 10–94 (TVDDQSRCVH…SNLICPNCRS (85 aa)). 8 residues coordinate Zn(2+): C17, H19, C40, C43, C68, C71, C89, and C92.

In terms of assembly, interacts with the small Tim proteins TIM8, TIM9, TIM10, TIM12, and TIM13.

It localises to the mitochondrion intermembrane space. The protein localises to the mitochondrion membrane. Required for the assembly or recycling of the small Tim proteins in the mitochondrial intermembrane, thereby participating in the import and insertion of multi-pass transmembrane proteins into the mitochondrial inner membrane. Probably acts by facilitating the formation of disulfide bonds in small Tim proteins. This chain is Helper of Tim protein 13 (HOT13), found in Saccharomyces cerevisiae (strain ATCC 204508 / S288c) (Baker's yeast).